The chain runs to 502 residues: Glycerol kinase (502 aa).

Thr14 lines the ADP pocket. ATP contacts are provided by Thr14, Thr15, and Ser16. Residue Thr14 coordinates sn-glycerol 3-phosphate. Arg18 is an ADP binding site. The sn-glycerol 3-phosphate site is built by Arg84, Glu85, and Tyr136. The glycerol site is built by Arg84, Glu85, and Tyr136. The residue at position 232 (His232) is a Phosphohistidine; by HPr. Asp246 provides a ligand contact to sn-glycerol 3-phosphate. Residues Asp246 and Gln247 each coordinate glycerol. Residues Thr268 and Gly311 each coordinate ADP. 4 residues coordinate ATP: Thr268, Gly311, Gln315, and Gly412. The ADP site is built by Gly412 and Asn416.

The protein belongs to the FGGY kinase family. In terms of assembly, homotetramer and homodimer (in equilibrium). The phosphoenolpyruvate-dependent sugar phosphotransferase system (PTS), including enzyme I, and histidine-containing protein (HPr) are required for the phosphorylation, which leads to the activation of the enzyme.

It carries out the reaction glycerol + ATP = sn-glycerol 3-phosphate + ADP + H(+). It functions in the pathway polyol metabolism; glycerol degradation via glycerol kinase pathway; sn-glycerol 3-phosphate from glycerol: step 1/1. Its activity is regulated as follows. Activated by phosphorylation and inhibited by fructose 1,6-bisphosphate (FBP). In terms of biological role, key enzyme in the regulation of glycerol uptake and metabolism. Catalyzes the phosphorylation of glycerol to yield sn-glycerol 3-phosphate. This chain is Glycerol kinase, found in Streptococcus gordonii (strain Challis / ATCC 35105 / BCRC 15272 / CH1 / DL1 / V288).